Consider the following 175-residue polypeptide: MMTYIVFILSTIFVISFVGFSSKPSPIYGGVGLIVSGGVGCGIVMSFGGSFLGLMVFLIYLGGMLVVFGYTTAMATEQYPEVWVSNKVVMGAFISGLIVEVVFVLCVLNSEELKGLFELNGMGDWVIYSVEDSGVFSKEVMGVAALYSYGVWLVIVTGWSLLIGVIVVLEVTRGG.

5 helical membrane passes run 1-21 (MMTY…VGFS), 25-45 (SPIY…GIVM), 47-67 (FGGS…MLVV), 88-108 (VVMG…LCVL), and 149-169 (YGVW…IVVL).

Belongs to the complex I subunit 6 family.

It is found in the mitochondrion membrane. It catalyses the reaction a ubiquinone + NADH + 5 H(+)(in) = a ubiquinol + NAD(+) + 4 H(+)(out). In terms of biological role, core subunit of the mitochondrial membrane respiratory chain NADH dehydrogenase (Complex I) that is believed to belong to the minimal assembly required for catalysis. Complex I functions in the transfer of electrons from NADH to the respiratory chain. The immediate electron acceptor for the enzyme is believed to be ubiquinone. The polypeptide is NADH-ubiquinone oxidoreductase chain 6 (MT-ND6) (Rhinolophus monoceros (Formosan lesser horseshoe bat)).